We begin with the raw amino-acid sequence, 498 residues long: Glycerol kinase (498 aa).

Thr12 lines the ADP pocket. ATP contacts are provided by Thr12, Thr13, and Ser14. A sn-glycerol 3-phosphate-binding site is contributed by Thr12. Arg16 lines the ADP pocket. Positions 82, 83, 134, and 243 each coordinate sn-glycerol 3-phosphate. Glycerol is bound by residues Arg82, Glu83, Tyr134, Asp243, and Gln244. ADP is bound by residues Thr265 and Gly308. ATP-binding residues include Thr265, Gly308, Gln312, and Gly409. ADP contacts are provided by Gly409 and Asn413.

This sequence belongs to the FGGY kinase family. As to quaternary structure, homotetramer and homodimer (in equilibrium).

It carries out the reaction glycerol + ATP = sn-glycerol 3-phosphate + ADP + H(+). Its pathway is polyol metabolism; glycerol degradation via glycerol kinase pathway; sn-glycerol 3-phosphate from glycerol: step 1/1. Activated by phosphorylation and inhibited by fructose 1,6-bisphosphate (FBP). Functionally, key enzyme in the regulation of glycerol uptake and metabolism. Catalyzes the phosphorylation of glycerol to yield sn-glycerol 3-phosphate. This is Glycerol kinase from Clostridium botulinum (strain Langeland / NCTC 10281 / Type F).